The following is a 1083-amino-acid chain: Error-prone DNA polymerase (1083 aa).

It belongs to the DNA polymerase type-C family. DnaE2 subfamily.

Its subcellular location is the cytoplasm. It catalyses the reaction DNA(n) + a 2'-deoxyribonucleoside 5'-triphosphate = DNA(n+1) + diphosphate. DNA polymerase involved in damage-induced mutagenesis and translesion synthesis (TLS). It is not the major replicative DNA polymerase. The sequence is that of Error-prone DNA polymerase from Xanthomonas axonopodis pv. citri (strain 306).